Here is a 401-residue protein sequence, read N- to C-terminus: MSQYSENIIIGAGAAGLFCAAQLAKLGKSVTVFDNGKKIGRKILMSGGGFCNFTNLEVTPAHYLSQNPHFVKSALARYTNWDFISLVAEQGITYHEKELGQLFCDEGAEQIVEMLKSECDKYGAKILLRSEVSQVERIQNDEKVRFVLQVNSTQWQCKNLIVATGGLSMPGLGATPFGYQIAEQFGIPVIPPRASLVPFTYRETDKFLTALSGISLPVTITALCGKSFYNQLLFTHRGISGPAVLQISNYWQPTESVEIDLLPNHNVEEEINQAKQSSPKQMLKTILVRLLPKKLVELWIEQGIVQDEVIANISKVRVKNLVDFIHHWEFTPNGTEGYRTAEVTMGGVDTKVISSKTMESNQVSGLYFIGEVLDVTGWLGGYNFQWAWSSAYACALSISRQ.

Residues A15, D34, N35, R41, G47, N52, V132, E371, and F384 each coordinate FAD.

This sequence belongs to the BaiN/RdsA family. RdsA subfamily. FAD serves as cofactor.

It catalyses the reaction a 5,6-dihydrouridine in mRNA + NAD(+) = a uridine in mRNA + NADH + H(+). Functionally, catalyzes the synthesis of 5,6-dihydrouridine (D) at position 2449 in 23S rRNA. This is Ribosomal RNA dihydrouridine synthase from Haemophilus influenzae (strain ATCC 51907 / DSM 11121 / KW20 / Rd).